A 196-amino-acid chain; its full sequence is Putative AAA family ATPase L572 (196 aa).

Residue 32 to 39 (NAVNCKET) participates in ATP binding.

The protein belongs to the AAA ATPase family.

This chain is Putative AAA family ATPase L572, found in Acanthamoeba polyphaga mimivirus (APMV).